Consider the following 156-residue polypeptide: 6,7-dimethyl-8-ribityllumazine synthase (156 aa).

5-amino-6-(D-ribitylamino)uracil contacts are provided by residues Phe23, 57 to 59 (AFE), and 81 to 83 (AVI). Residue 86-87 (ST) coordinates (2S)-2-hydroxy-3-oxobutyl phosphate. His89 acts as the Proton donor in catalysis. A 5-amino-6-(D-ribitylamino)uracil-binding site is contributed by Phe114. Residue Arg128 participates in (2S)-2-hydroxy-3-oxobutyl phosphate binding.

The protein belongs to the DMRL synthase family.

The enzyme catalyses (2S)-2-hydroxy-3-oxobutyl phosphate + 5-amino-6-(D-ribitylamino)uracil = 6,7-dimethyl-8-(1-D-ribityl)lumazine + phosphate + 2 H2O + H(+). Its pathway is cofactor biosynthesis; riboflavin biosynthesis; riboflavin from 2-hydroxy-3-oxobutyl phosphate and 5-amino-6-(D-ribitylamino)uracil: step 1/2. Its function is as follows. Catalyzes the formation of 6,7-dimethyl-8-ribityllumazine by condensation of 5-amino-6-(D-ribitylamino)uracil with 3,4-dihydroxy-2-butanone 4-phosphate. This is the penultimate step in the biosynthesis of riboflavin. This chain is 6,7-dimethyl-8-ribityllumazine synthase, found in Campylobacter lari (strain RM2100 / D67 / ATCC BAA-1060).